Reading from the N-terminus, the 151-residue chain is Ribonuclease H (151 aa).

The region spanning 2 to 143 is the RNase H type-1 domain; sequence SSNVIEIYAD…ADALANKGVD (142 aa). Residues Asp-11, Glu-49, Asp-71, and Asp-135 each contribute to the Mg(2+) site.

This sequence belongs to the RNase H family. As to quaternary structure, monomer. Mg(2+) serves as cofactor.

It is found in the cytoplasm. It catalyses the reaction Endonucleolytic cleavage to 5'-phosphomonoester.. Functionally, endonuclease that specifically degrades the RNA of RNA-DNA hybrids. The polypeptide is Ribonuclease H (Methylobacillus flagellatus (strain ATCC 51484 / DSM 6875 / VKM B-1610 / KT)).